A 456-amino-acid polypeptide reads, in one-letter code: O-phospho-L-seryl-tRNA:Cys-tRNA synthase 2 (456 aa).

Residues 146–147 (AR), Asn-251, and 274–276 (SGH) each bind pyridoxal 5'-phosphate. The residue at position 277 (Lys-277) is an N6-(pyridoxal phosphate)lysine.

This sequence belongs to the SepCysS family. As to quaternary structure, homodimer. Interacts with SepRS. The cofactor is pyridoxal 5'-phosphate.

The catalysed reaction is O-phospho-L-seryl-tRNA(Cys) + hydrogen sulfide + H(+) = L-cysteinyl-tRNA(Cys) + phosphate. Converts O-phospho-L-seryl-tRNA(Cys) (Sep-tRNA(Cys)) to L-cysteinyl-tRNA(Cys) (Cys-tRNA(Cys)). This Methanospirillum hungatei JF-1 (strain ATCC 27890 / DSM 864 / NBRC 100397 / JF-1) protein is O-phospho-L-seryl-tRNA:Cys-tRNA synthase 2.